The primary structure comprises 248 residues: UPF0736 protein BC_1176 (248 aa).

It belongs to the UPF0736 family.

The sequence is that of UPF0736 protein BC_1176 from Bacillus cereus (strain ATCC 14579 / DSM 31 / CCUG 7414 / JCM 2152 / NBRC 15305 / NCIMB 9373 / NCTC 2599 / NRRL B-3711).